The sequence spans 230 residues: Cytochrome c oxidase subunit 2 (230 aa).

At 1–14 (MAHPSQLGFQDAAS) the chain is on the mitochondrial intermembrane side. The helical transmembrane segment at 15–45 (PVMEELIHFHDHTLMIVFLISTLVLYIITAM) threads the bilayer. The Mitochondrial matrix portion of the chain corresponds to 46–59 (VSTKLTNKYILDSQ). The helical transmembrane segment at 60 to 87 (EIEIVWTILPAIILIMIALPSLRILYLM) threads the bilayer. Residues 88–230 (DEINDPHLTI…TWSSLMLEEA (143 aa)) lie on the Mitochondrial intermembrane side of the membrane. Residues H161, C196, E198, C200, H204, and M207 each contribute to the Cu cation site. E198 is a Mg(2+) binding site.

The protein belongs to the cytochrome c oxidase subunit 2 family. As to quaternary structure, component of the cytochrome c oxidase (complex IV, CIV), a multisubunit enzyme composed of 14 subunits. The complex is composed of a catalytic core of 3 subunits MT-CO1, MT-CO2 and MT-CO3, encoded in the mitochondrial DNA, and 11 supernumerary subunits COX4I, COX5A, COX5B, COX6A, COX6B, COX6C, COX7A, COX7B, COX7C, COX8 and NDUFA4, which are encoded in the nuclear genome. The complex exists as a monomer or a dimer and forms supercomplexes (SCs) in the inner mitochondrial membrane with NADH-ubiquinone oxidoreductase (complex I, CI) and ubiquinol-cytochrome c oxidoreductase (cytochrome b-c1 complex, complex III, CIII), resulting in different assemblies (supercomplex SCI(1)III(2)IV(1) and megacomplex MCI(2)III(2)IV(2)). Found in a complex with TMEM177, COA6, COX18, COX20, SCO1 and SCO2. Interacts with TMEM177 in a COX20-dependent manner. Interacts with COX20. Interacts with COX16. Requires Cu cation as cofactor.

The protein resides in the mitochondrion inner membrane. The catalysed reaction is 4 Fe(II)-[cytochrome c] + O2 + 8 H(+)(in) = 4 Fe(III)-[cytochrome c] + 2 H2O + 4 H(+)(out). Its function is as follows. Component of the cytochrome c oxidase, the last enzyme in the mitochondrial electron transport chain which drives oxidative phosphorylation. The respiratory chain contains 3 multisubunit complexes succinate dehydrogenase (complex II, CII), ubiquinol-cytochrome c oxidoreductase (cytochrome b-c1 complex, complex III, CIII) and cytochrome c oxidase (complex IV, CIV), that cooperate to transfer electrons derived from NADH and succinate to molecular oxygen, creating an electrochemical gradient over the inner membrane that drives transmembrane transport and the ATP synthase. Cytochrome c oxidase is the component of the respiratory chain that catalyzes the reduction of oxygen to water. Electrons originating from reduced cytochrome c in the intermembrane space (IMS) are transferred via the dinuclear copper A center (CU(A)) of subunit 2 and heme A of subunit 1 to the active site in subunit 1, a binuclear center (BNC) formed by heme A3 and copper B (CU(B)). The BNC reduces molecular oxygen to 2 water molecules using 4 electrons from cytochrome c in the IMS and 4 protons from the mitochondrial matrix. The protein is Cytochrome c oxidase subunit 2 (MT-CO2) of Scyliorhinus canicula (Small-spotted catshark).